The primary structure comprises 302 residues: MPRIGLIVNDGKPLAVQTADTIQQRLELAGHAVVRASSSGGMVGFANPDQHLRLLGYSACVPEGFNNSMALAIVLGGDGTVLSAARQTAPVGVPILTINTGHLGFLAEAYLGDLDRALEVVLTEQWTIEERSNLVVSVMRGDQRRWEALSLNEMALHREPLTSMCHFEIAIGRHAPVDIAADGVILSTPTGSTAYALSAGGPVISPDCPVLQLTPIAPHSLASRALVFSDREPVTVFPATPERLMMVVDGSAGCYVWPEDRVLIRRSEHPVRFVRLVDHEFFQVLRNKLGWGLPHIAKPDKG.

Asp-78 functions as the Proton acceptor in the catalytic mechanism. NAD(+) contacts are provided by residues 78-79 (DG), 152-153 (NE), Asp-182, 193-198 (TAYALS), and Ala-217.

Belongs to the NAD kinase family. A divalent metal cation serves as cofactor.

Its subcellular location is the cytoplasm. The enzyme catalyses NAD(+) + ATP = ADP + NADP(+) + H(+). Functionally, involved in the regulation of the intracellular balance of NAD and NADP, and is a key enzyme in the biosynthesis of NADP. Catalyzes specifically the phosphorylation on 2'-hydroxyl of the adenosine moiety of NAD to yield NADP. This chain is NAD kinase 2, found in Parasynechococcus marenigrum (strain WH8102).